The sequence spans 2116 residues: Non-structural polyprotein p200 (2116 aa).

The interval 36 to 49 (EVRDVVTAAQKRAI) is required for efficient proteolysis and P150-P90 interaction. The 191-residue stretch at 57–247 (VFTQMQVSDH…TRPCTTRIYQ (191 aa)) folds into the Alphavirus-like MT domain. Residues 711–720 (RAGPGQSAAT) are compositionally biased toward low complexity. The disordered stretch occupies residues 711 to 780 (RAGPGQSAAT…VLPTSAGPAD (70 aa)). Pro residues-rich tracts occupy residues 721-730 (SPPPGDPPPP) and 745-767 (TPPPAPARDPPPPAPSPPAPPRA). Short sequence motifs (pxxPxR; class II SH3-binding) lie at residues 727–732 (PPPPRR), 747–752 (PPAPAR), and 761–766 (PPAPPR). The region spanning 806 to 985 (SDIVESYARA…LTHASVLVGA (180 aa)) is the Macro domain. The interval 992–1031 (VSPPPTEPLASCPAGDPGRPAQRSASPPATPLGDATAPEP) is disordered. The Peptidase C27 domain maps to 1000-1301 (LASCPAGDPG…WLAVPLSRGG (302 aa)). Residue Cys1152 is the For cysteine protease activity of the active site. The interaction with host CALM1 stretch occupies residues 1152–1183 (CWFRAAANVAQAARACGAYTSAGCPKCAYGRA). 4 residues coordinate Zn(2+): Cys1175, Cys1178, Cys1227, and His1273. The interval 1193–1228 (FAALSQRWSASHADASPDGTGDPLDPLMETVGCACS) is EF-hand-like. Catalysis depends on His1273, which acts as the For cysteine protease activity. A (+)RNA virus helicase ATP-binding domain is found at 1320–1468 (EVRRLGDDAM…VPDRWPTERS (149 aa)). Position 1352–1359 (1352–1359 (MAAGAGKT)) interacts with a ribonucleoside 5'-triphosphate. In terms of domain architecture, (+)RNA virus helicase C-terminal spans 1469–1609 (RHTWRFPDCW…ELKEVPAGID (141 aa)). The involved in P150-P90 interaction stretch occupies residues 1700 to 1900 (YRAGEDGSTL…VELEISAALL (201 aa)). The RdRp catalytic domain occupies 1870–1981 (TNAIEVDFTE…FLPEGARSAA (112 aa)). Positions 1902–1906 (LPCAE) match the Human RB1 binding motif.

Interacts with RNA-directed RNA polymerase p90. Interacts with host CALM1; this interaction is necessary for the protease activity and viral infectivity. Interacts with host C1QBP. Interacts with the capsid protein. In terms of assembly, interacts with human RB1/retinoblastoma protein. Interacts with protease/methyltransferase p150. Zn(2+) is required as a cofactor. Post-translationally, specific enzymatic cleavage by its own cysteine protease yield mature proteins p150 and p90.

It is found in the host membrane. The protein resides in the host cytoplasm. The protein localises to the host perinuclear region. The enzyme catalyses RNA(n) + a ribonucleoside 5'-triphosphate = RNA(n+1) + diphosphate. The catalysed reaction is a ribonucleoside 5'-triphosphate + H2O = a ribonucleoside 5'-diphosphate + phosphate + H(+). It catalyses the reaction ATP + H2O = ADP + phosphate + H(+). In terms of biological role, probable principal replicase for the negative-strand DNA, which replicates the 40S (+) genomic RNA into (-) antigenomic RNA. It cannot replicate the (-) into (+) until cleaved into p150 and p90 mature proteins. Its function is as follows. Protease that cleaves the precursor polyprotein into two mature products. Together with RNA-directed RNA polymerase p90, replicates the 40S genomic and antigenomic RNA by recognizing replications specific signals. The heterodimer P150/p90 is probably the principal replicase for positive-strand genomic RNA and the 24S subgenomic RNA, which codes for structural proteins. Responsible for the mRNA-capping of the viral mRNAs. This function is necessary since all viral RNAs are synthesized in the cytoplasm, and host capping enzymes are restricted to the nucleus. Forms fibers late in the infection that may be involved in cell-to-cell spread of the virus RNA in the absence of virus particle formation. Functionally, together with protease/methyltransferase p150, replicates the 40S genomic and antigenomic RNA by recognizing replications specific signals. The heterodimer P150/p90 is probably the principal replicase for positive-strand genomic RNA and the 24S subgenomic RNA, which codes for structural proteins. A helicase activity is probably also present. This chain is Non-structural polyprotein p200, found in Rubella virus (strain TO-336) (RUBV).